We begin with the raw amino-acid sequence, 323 residues long: Nucleotide-binding protein ZMO1325 (323 aa).

An ATP-binding site is contributed by 25–32 (GLSGAGKS). 78–81 (DSRT) contacts GTP.

It belongs to the RapZ-like family.

Its function is as follows. Displays ATPase and GTPase activities. In Zymomonas mobilis subsp. mobilis (strain ATCC 31821 / ZM4 / CP4), this protein is Nucleotide-binding protein ZMO1325.